A 110-amino-acid chain; its full sequence is Endoribonuclease SymE (110 aa).

The SpoVT-AbrB domain maps to 29 to 74 (SRYPDYTRIPALTMKGQWLEAAGFATGTEVDVRVMNGCIVLTAQQP).

The protein belongs to the SymE family.

The protein resides in the cytoplasm. In terms of biological role, involved in the degradation and recycling of damaged RNA. It is itself a target for degradation by the ATP-dependent protease Lon. This chain is Endoribonuclease SymE, found in Salmonella heidelberg (strain SL476).